Consider the following 459-residue polypeptide: Cysteine--tRNA ligase (459 aa).

C28 is a binding site for Zn(2+). Positions 30–40 match the 'HIGH' region motif; that stretch reads VTVYDLCHIGH. Positions 209, 234, and 238 each coordinate Zn(2+). A 'KMSKS' region motif is present at residues 266 to 270; that stretch reads KMSKS. K269 is an ATP binding site.

It belongs to the class-I aminoacyl-tRNA synthetase family. Monomer. Zn(2+) serves as cofactor.

The protein localises to the cytoplasm. The catalysed reaction is tRNA(Cys) + L-cysteine + ATP = L-cysteinyl-tRNA(Cys) + AMP + diphosphate. In Haemophilus influenzae (strain 86-028NP), this protein is Cysteine--tRNA ligase.